The following is a 296-amino-acid chain: Acetyl-coenzyme A carboxylase carboxyl transferase subunit beta (296 aa).

The CoA carboxyltransferase N-terminal domain occupies 25–294; that stretch reads VWTKCTSCEQ…PFVEPELISE (270 aa). Residues Cys-29, Cys-32, Cys-48, and Cys-51 each contribute to the Zn(2+) site. The C4-type zinc-finger motif lies at 29–51; sequence CTSCEQVLYSEELKRNLYVCPKC.

This sequence belongs to the AccD/PCCB family. As to quaternary structure, acetyl-CoA carboxylase is a heterohexamer composed of biotin carboxyl carrier protein (AccB), biotin carboxylase (AccC) and two subunits each of ACCase subunit alpha (AccA) and ACCase subunit beta (AccD). Requires Zn(2+) as cofactor.

Its subcellular location is the cytoplasm. It catalyses the reaction N(6)-carboxybiotinyl-L-lysyl-[protein] + acetyl-CoA = N(6)-biotinyl-L-lysyl-[protein] + malonyl-CoA. The protein operates within lipid metabolism; malonyl-CoA biosynthesis; malonyl-CoA from acetyl-CoA: step 1/1. Functionally, component of the acetyl coenzyme A carboxylase (ACC) complex. Biotin carboxylase (BC) catalyzes the carboxylation of biotin on its carrier protein (BCCP) and then the CO(2) group is transferred by the transcarboxylase to acetyl-CoA to form malonyl-CoA. This chain is Acetyl-coenzyme A carboxylase carboxyl transferase subunit beta, found in Haemophilus influenzae (strain PittEE).